The following is a 427-amino-acid chain: 3-phosphoshikimate 1-carboxyvinyltransferase (427 aa).

K20, S21, and R25 together coordinate 3-phosphoshikimate. K20 contributes to the phosphoenolpyruvate binding site. Positions 90 and 118 each coordinate phosphoenolpyruvate. 6 residues coordinate 3-phosphoshikimate: S163, S164, Q165, S191, D309, and K336. A phosphoenolpyruvate-binding site is contributed by Q165. Catalysis depends on D309, which acts as the Proton acceptor. Residues R340 and R381 each contribute to the phosphoenolpyruvate site.

Belongs to the EPSP synthase family. As to quaternary structure, monomer.

The protein resides in the cytoplasm. It catalyses the reaction 3-phosphoshikimate + phosphoenolpyruvate = 5-O-(1-carboxyvinyl)-3-phosphoshikimate + phosphate. Its pathway is metabolic intermediate biosynthesis; chorismate biosynthesis. Catalyzes the transfer of the enolpyruvyl moiety of phosphoenolpyruvate (PEP) to the 5-hydroxyl of shikimate-3-phosphate (S3P) to produce enolpyruvyl shikimate-3-phosphate and inorganic phosphate. This chain is 3-phosphoshikimate 1-carboxyvinyltransferase, found in Methanococcoides burtonii (strain DSM 6242 / NBRC 107633 / OCM 468 / ACE-M).